A 540-amino-acid polypeptide reads, in one-letter code: Putative cysteine ligase BshC (540 aa).

The stretch at 457-477 (EKNRAFIQGQIAFLKERMERE) forms a coiled coil.

The protein belongs to the BshC family.

In terms of biological role, involved in bacillithiol (BSH) biosynthesis. May catalyze the last step of the pathway, the addition of cysteine to glucosamine malate (GlcN-Mal) to generate BSH. In Shouchella clausii (strain KSM-K16) (Alkalihalobacillus clausii), this protein is Putative cysteine ligase BshC.